Consider the following 466-residue polypeptide: Arginine biosynthesis bifunctional protein ArgJ, mitochondrial (466 aa).

Positions 194, 223, 234, 321, 461, and 466 each coordinate substrate. The Nucleophile role is filled by Thr234.

Belongs to the ArgJ family. In terms of assembly, heterodimer of an alpha and a beta chain. The alpha and beta chains are autoproteolytically processed from a single precursor protein within the mitochondrion.

The protein resides in the mitochondrion matrix. It carries out the reaction N(2)-acetyl-L-ornithine + L-glutamate = N-acetyl-L-glutamate + L-ornithine. The catalysed reaction is L-glutamate + acetyl-CoA = N-acetyl-L-glutamate + CoA + H(+). It participates in amino-acid biosynthesis; L-arginine biosynthesis; L-ornithine and N-acetyl-L-glutamate from L-glutamate and N(2)-acetyl-L-ornithine (cyclic): step 1/1. It functions in the pathway amino-acid biosynthesis; L-arginine biosynthesis; N(2)-acetyl-L-ornithine from L-glutamate: step 1/4. Functionally, catalyzes two activities which are involved in the cyclic version of arginine biosynthesis: the synthesis of acetylglutamate from glutamate and acetyl-CoA, and of ornithine by transacetylation between acetylornithine and glutamate. This chain is Arginine biosynthesis bifunctional protein ArgJ, mitochondrial, found in Aspergillus fumigatus (strain ATCC MYA-4609 / CBS 101355 / FGSC A1100 / Af293) (Neosartorya fumigata).